We begin with the raw amino-acid sequence, 1222 residues long: Probable disease resistance protein At5g45510 (1222 aa).

Residue 49-56 participates in ATP binding; the sequence is GEAGIGKT. Residues 122 to 183 are a coiled coil; that stretch reads GERDEDEEEE…KLEAEKKLVD (62 aa). Composition is skewed to basic and acidic residues over residues 171–205, 212–224, 263–279, and 286–322; these read AAEKLEAEKKLVDPAAKKAKDHGNKNPTDAAKEKT, GEDKAQTSSERKP, RRQETEEATKSGEHAEG, and SGEKKEDTDGEDEIRSADKEEPESQARVKTEEKHEKV. 2 disordered regions span residues 171–225 and 263–327; these read AAEK…RKPY and RRQE…PPTI. Threonine 293 is subject to Phosphothreonine. 11 LRR repeats span residues 654–676, 677–699, 702–724, 725–747, 785–806, 813–835, 836–856, 861–883, 884–906, 907–929, and 931–951; these read LLRVLIIRDCDLLKSIEELKALT, KLNTLEVSGASSLSKISEKFFES, ELRSLHLSGLKIESSPPSISGLK, ELHCLIIKDCPLLQDLPNIQELV, KLQHLDFSGSQIERLPIFQDSA, SLTRLLLRNCSKLRRLPSLKPLS, GLQILDLSGTTSLVEMLEVCF, ELKTLNLSGTNLSELATTIEDLS, SLNELLLRDCINLDAIPNIEKLE, NLEVIDVSGSAKLAKIEGSFEKM, and YLRVVDLSGTQVETPELPADT.

It belongs to the disease resistance NB-LRR family.

Probable disease resistance protein. This is Probable disease resistance protein At5g45510 from Arabidopsis thaliana (Mouse-ear cress).